Consider the following 511-residue polypeptide: Histidine ammonia-lyase (511 aa).

The segment at residues 142 to 144 is a cross-link (5-imidazolinone (Ala-Gly)); sequence ASG. Ser143 is modified (2,3-didehydroalanine (Ser)).

Belongs to the PAL/histidase family. Contains an active site 4-methylidene-imidazol-5-one (MIO), which is formed autocatalytically by cyclization and dehydration of residues Ala-Ser-Gly.

Its subcellular location is the cytoplasm. It carries out the reaction L-histidine = trans-urocanate + NH4(+). It functions in the pathway amino-acid degradation; L-histidine degradation into L-glutamate; N-formimidoyl-L-glutamate from L-histidine: step 1/3. The chain is Histidine ammonia-lyase from Rhizobium rhizogenes (Agrobacterium rhizogenes).